Reading from the N-terminus, the 699-residue chain is 1,4-alpha-glucan-branching enzyme (699 aa).

Substrate-binding positions include 59–60 (NE) and 88–90 (WAP). (1,4-alpha-D-glucosyl)n is bound at residue W104. Position 115 to 118 (115 to 118 (DYGK)) interacts with substrate. (1,4-alpha-D-glucosyl)n is bound at residue K140. A Phosphotyrosine modification is found at Y170. Residue 330–333 (EVLR) coordinates substrate. D354 (nucleophile) is an active-site residue. E409 serves as the catalytic Proton donor.

This sequence belongs to the glycosyl hydrolase 13 family. GlgB subfamily. As to quaternary structure, monomer.

It catalyses the reaction Transfers a segment of a (1-&gt;4)-alpha-D-glucan chain to a primary hydroxy group in a similar glucan chain.. The protein operates within glycan biosynthesis; glycogen biosynthesis. Glycogen-branching enzyme participates in the glycogen biosynthetic process along with glycogenin and glycogen synthase. Generates alpha-1,6-glucosidic branches from alpha-1,4-linked glucose chains, to increase solubility of the glycogen polymer. This chain is 1,4-alpha-glucan-branching enzyme (GBE1), found in Equus caballus (Horse).